Consider the following 87-residue polypeptide: MSDAHGVARDQLRAFVERIERLEEEKKTIADDIKDVYGEAKGMGFDTKILKKVIALRKKDEQERMEEDLILDTYLHALGMIENPPEG.

It belongs to the UPF0335 family.

This is UPF0335 protein Avi_3695 from Allorhizobium ampelinum (strain ATCC BAA-846 / DSM 112012 / S4) (Agrobacterium vitis (strain S4)).